We begin with the raw amino-acid sequence, 379 residues long: Mannitol-1-phosphate 5-dehydrogenase (379 aa).

3–14 (ALHFGAGNIGRG) is an NAD(+) binding site.

It belongs to the mannitol dehydrogenase family.

The catalysed reaction is D-mannitol 1-phosphate + NAD(+) = beta-D-fructose 6-phosphate + NADH + H(+). The polypeptide is Mannitol-1-phosphate 5-dehydrogenase (Actinobacillus pleuropneumoniae serotype 3 (strain JL03)).